The chain runs to 624 residues: Carbon monoxide dehydrogenase (624 aa).

[4Fe-4S] cluster contacts are provided by C37, C46, C49, C54, and C65. [Ni-4Fe-5S] cluster contacts are provided by H256, C292, C336, C444, C475, and C516.

It belongs to the Ni-containing carbon monoxide dehydrogenase family. Homodimer. [4Fe-4S] cluster serves as cofactor. The cofactor is [Ni-4Fe-5S] cluster.

It catalyses the reaction CO + 2 oxidized [2Fe-2S]-[ferredoxin] + H2O = 2 reduced [2Fe-2S]-[ferredoxin] + CO2 + 2 H(+). CODH oxidizes carbon monoxide coupled, via CooF, to the reduction of a hydrogen cation by a hydrogenase (possibly CooH). The polypeptide is Carbon monoxide dehydrogenase (cooS) (Methanocaldococcus jannaschii (strain ATCC 43067 / DSM 2661 / JAL-1 / JCM 10045 / NBRC 100440) (Methanococcus jannaschii)).